Reading from the N-terminus, the 1150-residue chain is Fl(2)d-associated complex component (1150 aa).

Over residues 1–10 (MEKKAKESLR) the composition is skewed to basic and acidic residues. Disordered regions lie at residues 1 to 444 (MEKK…EEER), 477 to 710 (QGRE…PPPL), 833 to 914 (ASED…MDTN), and 1034 to 1053 (KEQG…AKIP). The segment covering 11–20 (RYKKAARHSA) has biased composition (basic residues). Residues 21–44 (THSSSSDSTSDSDSGSSSYSSTDS) are compositionally biased toward low complexity. A compositionally biased stretch (gly residues) spans 47-69 (GVGGVGVGVGVPGGAGGPGGSGS). Positions 72–97 (GHPHTHGHGHHPRSAERHHRKKKSSR) are enriched in basic residues. A compositionally biased stretch (low complexity) spans 98 to 107 (RGGSSSGDEP). Composition is skewed to basic residues over residues 110-144 (SRRK…KKRA) and 162-175 (AKLK…RLRA). Residues 122-147 (KKLVAKRNHIKRKLKEARLKKRAAAA) adopt a coiled-coil conformation. The span at 176–199 (ASKEQRERDKLRVVQRDRERDHHR) shows a compositional bias: basic and acidic residues. The segment covering 202–215 (SSRSPPSSSTTTTT) has biased composition (low complexity). A coiled-coil region spans residues 269-347 (PSLERERERE…KLRRQEEEEG (79 aa)). 3 stretches are compositionally biased toward basic and acidic residues: residues 270–414 (SLER…DEMR), 428–444 (YAPR…EEER), and 492–529 (PDER…PEWE). The segment covering 537–558 (AGGGPGGPSGTPGRPGGFVGGP) has biased composition (gly residues). Basic and acidic residues-rich tracts occupy residues 589-611 (ERER…DRPD) and 630-640 (WLEHDQREKPR). The span at 660–669 (PPAPSHPHPA) shows a compositional bias: pro residues. A compositionally biased stretch (basic and acidic residues) spans 693 to 702 (GHGDHGERPG). The segment covering 851–861 (QSLNLNQSLSS) has biased composition (low complexity). A compositionally biased stretch (acidic residues) spans 879-889 (ELSEISDSDDD). Residues 890–903 (ILNKTDKVRPKNEL) are compositionally biased toward basic and acidic residues. A compositionally biased stretch (acidic residues) spans 905 to 914 (TETEQEMDTN).

Belongs to the ZC3H13 family. Component of the WMM complex, a N6-methyltransferase complex composed of a catalytic subcomplex, named MAC, and of an associated subcomplex, named MACOM. The MAC subcomplex is composed of Ime4/Mettl3 and Mettl14. The MACOM subcomplex is composed of fl(2)d, Flacc/Xio, Hakai, vir, and, in some cases of nito. Widely expressed during embryogenesis but shows enrichment in the neuroectoderm.

It is found in the nucleus. In terms of biological role, associated component of the WMM complex, a complex that mediates N6-methyladenosine (m6A) methylation of mRNAs, a modification that plays a role in the efficiency of mRNA splicing and is required for sex determination. In the WMM complex, acts as a key regulator of m6A methylation by bridging fl(2)d to the RNA-binding component nito. Required for sex determination and dosage compensation via Sxl alternative splicing: m6A methylation acts as a key regulator of Sxl pre-mRNA and promotes female-specific alternative splicing of Sxl, which determines female physiognomy. This is Fl(2)d-associated complex component from Drosophila melanogaster (Fruit fly).